We begin with the raw amino-acid sequence, 379 residues long: Alcohol dehydrogenase class-3 (379 aa).

S2 is modified (N-acetylserine). Zn(2+) contacts are provided by C48, H70, C100, C103, C106, C114, and C177.

This sequence belongs to the zinc-containing alcohol dehydrogenase family. Class-III subfamily. Zn(2+) serves as cofactor.

The catalysed reaction is a primary alcohol + NAD(+) = an aldehyde + NADH + H(+). The enzyme catalyses a secondary alcohol + NAD(+) = a ketone + NADH + H(+). It catalyses the reaction S-(hydroxymethyl)glutathione + NADP(+) = S-formylglutathione + NADPH + H(+). It carries out the reaction S-(hydroxymethyl)glutathione + NAD(+) = S-formylglutathione + NADH + H(+). The catalysed reaction is octan-1-ol + NAD(+) = octanal + NADH + H(+). Its function is as follows. Class-III ADH is remarkably ineffective in oxidizing ethanol, but it readily catalyzes the oxidation of long-chain primary alcohols and the oxidation of S-(hydroxymethyl) glutathione. The protein is Alcohol dehydrogenase class-3 (Fdh) of Drosophila melanogaster (Fruit fly).